The following is a 217-amino-acid chain: MKIVGAEGQEHEEFDIPFKLWRKFAAKRRLRYQSWEEGKEVMLNKLDKDLLTDFKAFAARFSSRPRPSKIFGTSSSEAISGEGNGQSGRGAARNHPRARTRCGATSTNHGGRVVPVAVAAASPRAPKKAAEAASRVRGRRRLVTRCAGAAHTQPAAIDLDGGFGHCVQKEKEAPLSQARAPAIPRGDRGQRGRKRRCGATNGGFQQPTGANQARQGR.

2 disordered regions span residues 68 to 110 (SKIF…TNHG) and 170 to 217 (EKEA…RQGR). Over residues 202 to 217 (GGFQQPTGANQARQGR) the composition is skewed to polar residues.

The protein belongs to the adenoviridae U exon protein family.

It is found in the host nucleus. The protein resides in the host nucleoplasm. It localises to the host nucleolus. Might play a role in viral replication since it is associated with viral replication centers. Seems to have an effect on DBP localization. The sequence is that of U exon protein from Homo sapiens (Human).